A 323-amino-acid polypeptide reads, in one-letter code: tRNA dimethylallyltransferase (323 aa).

12–19 is an ATP binding site; that stretch reads GPTAAGKT. Substrate is bound at residue 14–19; sequence TAAGKT. Interaction with substrate tRNA stretches follow at residues 37 to 40 and 161 to 165; these read DSAL and QRLIR.

This sequence belongs to the IPP transferase family. Monomer. It depends on Mg(2+) as a cofactor.

It catalyses the reaction adenosine(37) in tRNA + dimethylallyl diphosphate = N(6)-dimethylallyladenosine(37) in tRNA + diphosphate. Its function is as follows. Catalyzes the transfer of a dimethylallyl group onto the adenine at position 37 in tRNAs that read codons beginning with uridine, leading to the formation of N6-(dimethylallyl)adenosine (i(6)A). In Pseudomonas putida (strain ATCC 47054 / DSM 6125 / CFBP 8728 / NCIMB 11950 / KT2440), this protein is tRNA dimethylallyltransferase.